The chain runs to 379 residues: Cell division protein FtsZ (379 aa).

GTP is bound by residues 18 to 22, 105 to 107, glutamate 136, arginine 140, and aspartate 184; these read GGGVN and GTG.

It belongs to the FtsZ family. Homodimer. Polymerizes to form a dynamic ring structure in a strictly GTP-dependent manner. Interacts directly with several other division proteins.

The protein localises to the cytoplasm. Essential cell division protein that forms a contractile ring structure (Z ring) at the future cell division site. The regulation of the ring assembly controls the timing and the location of cell division. One of the functions of the FtsZ ring is to recruit other cell division proteins to the septum to produce a new cell wall between the dividing cells. Binds GTP and shows GTPase activity. This Mycobacterium bovis (strain ATCC BAA-935 / AF2122/97) protein is Cell division protein FtsZ.